A 124-amino-acid polypeptide reads, in one-letter code: Small ribosomal subunit protein uS13 (124 aa).

Positions 94 to 124 are disordered; sequence GLPLRGQRTKNNSRTRKGKRKTVANKKKATK. Basic residues predominate over residues 100–124; it reads QRTKNNSRTRKGKRKTVANKKKATK.

This sequence belongs to the universal ribosomal protein uS13 family. As to quaternary structure, part of the 30S ribosomal subunit. Forms a loose heterodimer with protein S19. Forms two bridges to the 50S subunit in the 70S ribosome.

Its function is as follows. Located at the top of the head of the 30S subunit, it contacts several helices of the 16S rRNA. In the 70S ribosome it contacts the 23S rRNA (bridge B1a) and protein L5 of the 50S subunit (bridge B1b), connecting the 2 subunits; these bridges are implicated in subunit movement. Contacts the tRNAs in the A and P-sites. The protein is Small ribosomal subunit protein uS13 of Flavobacterium psychrophilum (strain ATCC 49511 / DSM 21280 / CIP 103535 / JIP02/86).